The chain runs to 605 residues: Terpenoid synthase 18 (605 aa).

Residues Asp-356, Asp-360, Asn-500, Thr-504, and Glu-508 each contribute to the Mg(2+) site. Residues 356-360 (DDTYD) carry the DDXXD motif motif.

The protein belongs to the terpene synthase family. Tpsa subfamily. It depends on Mg(2+) as a cofactor. Requires Mn(2+) as cofactor. In terms of tissue distribution, predominantly expressed in flowers and siliques but also in roots and leaves.

The protein resides in the cytoplasm. It participates in secondary metabolite biosynthesis; terpenoid biosynthesis. This chain is Terpenoid synthase 18 (TPS18), found in Arabidopsis thaliana (Mouse-ear cress).